A 397-amino-acid chain; its full sequence is tRNA(Met) cytidine acetate ligase (397 aa).

Residues 7-20 (VTEY…HIYH), G101, N152, and R177 contribute to the ATP site.

Belongs to the TmcAL family.

The protein resides in the cytoplasm. It carries out the reaction cytidine(34) in elongator tRNA(Met) + acetate + ATP = N(4)-acetylcytidine(34) in elongator tRNA(Met) + AMP + diphosphate. In terms of biological role, catalyzes the formation of N(4)-acetylcytidine (ac(4)C) at the wobble position of elongator tRNA(Met), using acetate and ATP as substrates. First activates an acetate ion to form acetyladenylate (Ac-AMP) and then transfers the acetyl group to tRNA to form ac(4)C34. The chain is tRNA(Met) cytidine acetate ligase from Leuconostoc citreum (strain KM20).